A 25-amino-acid chain; its full sequence is Small ribosomal subunit protein eS32 (25 aa).

The segment at 1 to 25 is disordered; the sequence is MREKWKKKRSRRLRRKRRKMRARSK.

It belongs to the eukaryotic ribosomal protein eS32 family. As to quaternary structure, component of the large ribosomal subunit.

The polypeptide is Small ribosomal subunit protein eS32 (rpl41) (Agaricus bisporus (White button mushroom)).